We begin with the raw amino-acid sequence, 578 residues long: Asparagine synthetase [glutamine-hydrolyzing] 2 (578 aa).

The active-site For GATase activity is the C2. Positions 2-185 constitute a Glutamine amidotransferase type-2 domain; the sequence is CGILAVLGCI…PGHIYSSKQG (184 aa). L-glutamine is bound by residues 50–54, 75–77, and D98; these read RLAII and NGE. The region spanning 210–450 is the Asparagine synthetase domain; sequence LRNAFEKAVI…LPKHILYRQK (241 aa). ATP contacts are provided by residues L231, I267, and 341-342; that span reads SG.

Expressed in the vascular region adjacent to leaf mesophyll cells in the companion cell-sieve tube element complex.

The catalysed reaction is L-aspartate + L-glutamine + ATP + H2O = L-asparagine + L-glutamate + AMP + diphosphate + H(+). Its pathway is amino-acid biosynthesis; L-asparagine biosynthesis. In terms of biological role, essential for nitrogen assimilation, distribution and remobilization within the plant via the phloem. The protein is Asparagine synthetase [glutamine-hydrolyzing] 2 (ASN2) of Arabidopsis thaliana (Mouse-ear cress).